A 121-amino-acid polypeptide reads, in one-letter code: Large ribosomal subunit protein bL12 (121 aa).

The protein belongs to the bacterial ribosomal protein bL12 family. In terms of assembly, homodimer. Part of the ribosomal stalk of the 50S ribosomal subunit. Forms a multimeric L10(L12)X complex, where L10 forms an elongated spine to which 2 to 4 L12 dimers bind in a sequential fashion. Binds GTP-bound translation factors.

In terms of biological role, forms part of the ribosomal stalk which helps the ribosome interact with GTP-bound translation factors. Is thus essential for accurate translation. The polypeptide is Large ribosomal subunit protein bL12 (Limosilactobacillus fermentum (strain NBRC 3956 / LMG 18251) (Lactobacillus fermentum)).